A 112-amino-acid polypeptide reads, in one-letter code: Probable fatty acid-binding protein (112 aa).

This sequence belongs to the calycin superfamily. Fatty-acid binding protein (FABP) family.

In Anopheles gambiae (African malaria mosquito), this protein is Probable fatty acid-binding protein.